Reading from the N-terminus, the 254-residue chain is tRNA (guanine-N(1)-)-methyltransferase (254 aa).

S-adenosyl-L-methionine is bound by residues Gly113 and 133 to 138 (IGDYVL).

It belongs to the RNA methyltransferase TrmD family. As to quaternary structure, homodimer.

Its subcellular location is the cytoplasm. It catalyses the reaction guanosine(37) in tRNA + S-adenosyl-L-methionine = N(1)-methylguanosine(37) in tRNA + S-adenosyl-L-homocysteine + H(+). In terms of biological role, specifically methylates guanosine-37 in various tRNAs. The chain is tRNA (guanine-N(1)-)-methyltransferase from Edwardsiella ictaluri (strain 93-146).